Consider the following 120-residue polypeptide: MSRKIDLLDRRRARVRRAIRAAANGRPRLSVFRSSKQIYVQVIDDANGRTLAAASSLDKDLRARLKTGADKAAAAEVGKLVAERAKAAGVTKVIFDRSGYLYHGRVKALADAAREGGLDF.

Belongs to the universal ribosomal protein uL18 family. As to quaternary structure, part of the 50S ribosomal subunit; part of the 5S rRNA/L5/L18/L25 subcomplex. Contacts the 5S and 23S rRNAs.

Its function is as follows. This is one of the proteins that bind and probably mediate the attachment of the 5S RNA into the large ribosomal subunit, where it forms part of the central protuberance. The protein is Large ribosomal subunit protein uL18 of Methylobacterium nodulans (strain LMG 21967 / CNCM I-2342 / ORS 2060).